The following is a 230-amino-acid chain: UPF0173 metal-dependent hydrolase Pden_0574 (230 aa).

It belongs to the UPF0173 family.

This chain is UPF0173 metal-dependent hydrolase Pden_0574, found in Paracoccus denitrificans (strain Pd 1222).